The following is a 297-amino-acid chain: Inosose dehydratase (297 aa).

Belongs to the IolE/MocC family. Requires glutathione as cofactor. The cofactor is Co(2+). Mn(2+) serves as cofactor.

The enzyme catalyses scyllo-inosose = 3D-3,5/4-trihydroxycyclohexane-1,2-dione + H2O. It functions in the pathway polyol metabolism; myo-inositol degradation into acetyl-CoA; acetyl-CoA from myo-inositol: step 2/7. In terms of biological role, catalyzes the dehydration of inosose (2-keto-myo-inositol, 2KMI or 2,4,6/3,5-pentahydroxycyclohexanone) to 3D-(3,5/4)-trihydroxycyclohexane-1,2-dione (D-2,3-diketo-4-deoxy-epi-inositol). In Clostridium perfringens (strain ATCC 13124 / DSM 756 / JCM 1290 / NCIMB 6125 / NCTC 8237 / Type A), this protein is Inosose dehydratase.